A 131-amino-acid chain; its full sequence is MQGNLPPEAQEKIEELQDLQETAQQVAQQKQQAETQLRESETALETLDDIEGDTQMYQEVGELLIETDYDEAYENLEEKVDSLEVRVETLTKQEERVQDQFEGLQEELQEMLQGGAGGGPMGPGGPGAGGA.

Disordered regions lie at residues 19–41 and 112–131; these read LQET…RESE and LQGG…AGGA. Over residues 20–35 the composition is skewed to low complexity; that stretch reads QETAQQVAQQKQQAET. Residues 114 to 131 show a composition bias toward gly residues; that stretch reads GGAGGGPMGPGGPGAGGA.

It belongs to the prefoldin subunit beta family. Heterohexamer of two alpha and four beta subunits.

The protein localises to the cytoplasm. In terms of biological role, molecular chaperone capable of stabilizing a range of proteins. Seems to fulfill an ATP-independent, HSP70-like function in archaeal de novo protein folding. The chain is Prefoldin subunit beta from Natronomonas pharaonis (strain ATCC 35678 / DSM 2160 / CIP 103997 / JCM 8858 / NBRC 14720 / NCIMB 2260 / Gabara) (Halobacterium pharaonis).